Here is a 471-residue protein sequence, read N- to C-terminus: UDP-N-acetylmuramate--L-alanine ligase (471 aa).

An ATP-binding site is contributed by 114–120; the sequence is GTHGKTT.

This sequence belongs to the MurCDEF family.

Its subcellular location is the cytoplasm. It carries out the reaction UDP-N-acetyl-alpha-D-muramate + L-alanine + ATP = UDP-N-acetyl-alpha-D-muramoyl-L-alanine + ADP + phosphate + H(+). It functions in the pathway cell wall biogenesis; peptidoglycan biosynthesis. Cell wall formation. This chain is UDP-N-acetylmuramate--L-alanine ligase, found in Methylobacterium sp. (strain 4-46).